A 397-amino-acid polypeptide reads, in one-letter code: MEDLFLKALPLLRELKKHGWQAYFVGGAVRDAQMNRDVGDIDIATDASPEEIEAIFPKTVDVGKEHGTIIVLFEGESYEVTTFRAELEYEDYRRPSGVQFIKSLKEDLKRRDLTINAMAMDEEGRLIDYFGGLRDIRERLIQTVGDPAERFHEDALRMLRALRFMSQLEFELSPNTKKAICENRPLLAHISTERKTVEFEKLLKGKAAGRALEAAAETGLYKELPGLDGKKERVLAARAFPFYQLQKSADIWAAFIHMISINPAEAHRFLKGWKLPGKVIRQALHTAERIDQKWDAVSMYEAGEETLLAASAIRSLRDKQAIDEEQLAEIRQSYQALPIKSLKDLAVSGSDLLNFRKKPAGKWVSDDLKRIERAVLNGELANQKKAIEEWLDSCSQI.

Positions 27 and 30 each coordinate ATP. The CTP site is built by glycine 27 and arginine 30. Mg(2+) contacts are provided by aspartate 40 and aspartate 42. ATP-binding residues include arginine 111, aspartate 154, arginine 157, arginine 160, and arginine 163. CTP-binding residues include arginine 111, aspartate 154, arginine 157, arginine 160, and arginine 163.

It belongs to the tRNA nucleotidyltransferase/poly(A) polymerase family. Bacterial CCA-adding enzyme type 3 subfamily. In terms of assembly, homodimer. Requires Mg(2+) as cofactor.

The enzyme catalyses a tRNA precursor + 2 CTP + ATP = a tRNA with a 3' CCA end + 3 diphosphate. The catalysed reaction is a tRNA with a 3' CCA end + 2 CTP + ATP = a tRNA with a 3' CCACCA end + 3 diphosphate. Functionally, catalyzes the addition and repair of the essential 3'-terminal CCA sequence in tRNAs without using a nucleic acid template. Adds these three nucleotides in the order of C, C, and A to the tRNA nucleotide-73, using CTP and ATP as substrates and producing inorganic pyrophosphate. tRNA 3'-terminal CCA addition is required both for tRNA processing and repair. Also involved in tRNA surveillance by mediating tandem CCA addition to generate a CCACCA at the 3' terminus of unstable tRNAs. While stable tRNAs receive only 3'-terminal CCA, unstable tRNAs are marked with CCACCA and rapidly degraded. This Bacillus licheniformis (strain ATCC 14580 / DSM 13 / JCM 2505 / CCUG 7422 / NBRC 12200 / NCIMB 9375 / NCTC 10341 / NRRL NRS-1264 / Gibson 46) protein is CCA-adding enzyme.